The primary structure comprises 452 residues: Pup--protein ligase (452 aa).

E9 lines the Mg(2+) pocket. An ATP-binding site is contributed by R53. Mg(2+) is bound at residue Y55. Residue D57 is the Proton acceptor of the active site. E63 is a binding site for Mg(2+). 2 residues coordinate ATP: T66 and W419.

The protein belongs to the Pup ligase/Pup deamidase family. Pup-conjugating enzyme subfamily.

It carries out the reaction ATP + [prokaryotic ubiquitin-like protein]-L-glutamate + [protein]-L-lysine = ADP + phosphate + N(6)-([prokaryotic ubiquitin-like protein]-gamma-L-glutamyl)-[protein]-L-lysine.. It participates in protein degradation; proteasomal Pup-dependent pathway. It functions in the pathway protein modification; protein pupylation. Its function is as follows. Catalyzes the covalent attachment of the prokaryotic ubiquitin-like protein modifier Pup to the proteasomal substrate proteins, thereby targeting them for proteasomal degradation. This tagging system is termed pupylation. The ligation reaction involves the side-chain carboxylate of the C-terminal glutamate of Pup and the side-chain amino group of a substrate lysine. The polypeptide is Pup--protein ligase (Actinosynnema mirum (strain ATCC 29888 / DSM 43827 / JCM 3225 / NBRC 14064 / NCIMB 13271 / NRRL B-12336 / IMRU 3971 / 101)).